We begin with the raw amino-acid sequence, 418 residues long: Mitochondrial distribution and morphology protein 10 (418 aa).

This sequence belongs to the MDM10 family. Component of the ER-mitochondria encounter structure (ERMES) or MDM complex, composed of MMM1, MDM10, MDM12 and MDM34. Associates with the mitochondrial outer membrane sorting assembly machinery SAM(core) complex.

Its subcellular location is the mitochondrion outer membrane. Its function is as follows. Component of the ERMES/MDM complex, which serves as a molecular tether to connect the endoplasmic reticulum and mitochondria. Components of this complex are involved in the control of mitochondrial shape and protein biogenesis and may function in phospholipid exchange. MDM10 is involved in the late assembly steps of the general translocase of the mitochondrial outer membrane (TOM complex). Functions in the TOM40-specific route of the assembly of outer membrane beta-barrel proteins, including the association of TOM40 with the receptor TOM22 and small TOM proteins. Can associate with the SAM(core) complex as well as the MDM12-MMM1 complex, both involved in late steps of the major beta-barrel assembly pathway, that is responsible for biogenesis of all outer membrane beta-barrel proteins. May act as a switch that shuttles between both complexes and channels precursor proteins into the TOM40-specific pathway. Plays a role in mitochondrial morphology and in the inheritance of mitochondria. This chain is Mitochondrial distribution and morphology protein 10, found in Meyerozyma guilliermondii (strain ATCC 6260 / CBS 566 / DSM 6381 / JCM 1539 / NBRC 10279 / NRRL Y-324) (Yeast).